The sequence spans 121 residues: Large ribosomal subunit protein bL19 (121 aa).

The protein belongs to the bacterial ribosomal protein bL19 family.

Its function is as follows. This protein is located at the 30S-50S ribosomal subunit interface and may play a role in the structure and function of the aminoacyl-tRNA binding site. The sequence is that of Large ribosomal subunit protein bL19 from Borrelia garinii subsp. bavariensis (strain ATCC BAA-2496 / DSM 23469 / PBi) (Borreliella bavariensis).